The chain runs to 333 residues: HTH-type transcriptional regulator Cphy_2742 (333 aa).

Residues M1–L55 form the HTH lacI-type domain. The segment at residues I3–N22 is a DNA-binding region (H-T-H motif).

Its subcellular location is the cytoplasm. Involved in control of pectin and galacturonic acid metabolism. Probably represses a comprehensive set of pectin fermentation genes by binding a conserved palindrome at or downstream of their transcription start site to block transcription. In the presence of galacturonic acid may activate transcription of acetate synthesis and other aspects of carbon metabolism. This chain is HTH-type transcriptional regulator Cphy_2742, found in Lachnoclostridium phytofermentans (strain ATCC 700394 / DSM 18823 / ISDg) (Clostridium phytofermentans).